The sequence spans 283 residues: Probable endonuclease 4 (283 aa).

The Zn(2+) site is built by His69, His109, Glu145, Asp179, His182, His216, Asp229, His231, and Glu261.

This sequence belongs to the AP endonuclease 2 family. Zn(2+) is required as a cofactor.

The catalysed reaction is Endonucleolytic cleavage to 5'-phosphooligonucleotide end-products.. Functionally, endonuclease IV plays a role in DNA repair. It cleaves phosphodiester bonds at apurinic or apyrimidinic (AP) sites, generating a 3'-hydroxyl group and a 5'-terminal sugar phosphate. In Campylobacter concisus (strain 13826), this protein is Probable endonuclease 4.